A 1133-amino-acid polypeptide reads, in one-letter code: DNA-directed RNA polymerase subunit beta (1133 aa).

The segment at 1085 to 1133 is disordered; that stretch reads ADVSSRHTPSRPTYESVTSEDLSPAAGGTFTLARRSREEDEDREEEDDF. Polar residues predominate over residues 1090–1105; that stretch reads RHTPSRPTYESVTSED. The segment covering 1123-1133 has biased composition (acidic residues); it reads EDEDREEEDDF.

It belongs to the RNA polymerase beta chain family. As to quaternary structure, in cyanobacteria the RNAP catalytic core is composed of 2 alpha, 1 beta, 1 beta', 1 gamma and 1 omega subunit. When a sigma factor is associated with the core the holoenzyme is formed, which can initiate transcription.

It carries out the reaction RNA(n) + a ribonucleoside 5'-triphosphate = RNA(n+1) + diphosphate. Its function is as follows. DNA-dependent RNA polymerase catalyzes the transcription of DNA into RNA using the four ribonucleoside triphosphates as substrates. The polypeptide is DNA-directed RNA polymerase subunit beta (Synechococcus sp. (strain JA-3-3Ab) (Cyanobacteria bacterium Yellowstone A-Prime)).